The following is a 206-amino-acid chain: Protein GrpE (206 aa).

Belongs to the GrpE family. Homodimer.

It is found in the cytoplasm. Functionally, participates actively in the response to hyperosmotic and heat shock by preventing the aggregation of stress-denatured proteins, in association with DnaK and GrpE. It is the nucleotide exchange factor for DnaK and may function as a thermosensor. Unfolded proteins bind initially to DnaJ; upon interaction with the DnaJ-bound protein, DnaK hydrolyzes its bound ATP, resulting in the formation of a stable complex. GrpE releases ADP from DnaK; ATP binding to DnaK triggers the release of the substrate protein, thus completing the reaction cycle. Several rounds of ATP-dependent interactions between DnaJ, DnaK and GrpE are required for fully efficient folding. The chain is Protein GrpE from Shewanella baltica (strain OS223).